The sequence spans 454 residues: Natural cytotoxicity triggering receptor 3 ligand 1 (454 aa).

Positions 1-24 (MTWRAAASTCAALLILLWALTTEG) are cleaved as a signal peptide. At 25 to 262 (DLKVEMMAGG…SETEKTDNFS (238 aa)) the chain is on the extracellular side. The Ig-like V-type domain maps to 27 to 138 (KVEMMAGGTQ…LKAQGTVQLE (112 aa)). N-linked (GlcNAc...) asparagine glycans are attached at residues asparagine 43 and asparagine 57. A disulfide bond links cysteine 48 and cysteine 122. 2 interaction with NCR3 regions span residues 59 to 62 (TSMG) and 127 to 130 (TPLK). In terms of domain architecture, Ig-like C1-type spans 143 to 244 (PASRLLLDQV…LHTPLRSNFT (102 aa)). A disulfide bond links cysteine 163 and cysteine 228. N-linked (GlcNAc...) asparagine glycosylation is found at asparagine 174, asparagine 208, asparagine 216, asparagine 242, and asparagine 260. A helical membrane pass occupies residues 263–283 (IHWWPISFIGVGLVLLIVLIP). At 284 to 454 (WKKICNKSSS…QPPTLLLPLQ (171 aa)) the chain is on the cytoplasmic side. The segment at 291 to 429 (SSSAYTPLKC…APILPVSPIW (139 aa)) is retroviral-Gag-like. The segment at 395–454 (GKSIDDNSTKSEKQTPREHSDAVPDAPILPVSPIWEPPPATTSTTPVLSSQPPTLLLPLQ) is disordered. Basic and acidic residues predominate over residues 397–416 (SIDDNSTKSEKQTPREHSDA). Positions 435-454 (TTSTTPVLSSQPPTLLLPLQ) are enriched in low complexity.

Monomer. Interacts specifically with NCR3, but not with other natural killer cell-activating receptors, including NCR1, NCR2 and KLRK1. As to expression, not detected in any normal tissue tested. Expressed at the surface of several tumor cell lines including T and B-lymphomas, myeloid leukemias, melanomas, carcinomas and large T SV40 antigen-transformed cells (at protein level).

The protein resides in the cell membrane. Its function is as follows. Triggers NCR3-dependent natural killer cell activation. The protein is Natural cytotoxicity triggering receptor 3 ligand 1 (NCR3LG1) of Homo sapiens (Human).